Consider the following 420-residue polypeptide: Calreticulin (420 aa).

The first 18 residues, 1-18 (MKWGVVAVLATLVVAASA), serve as a signal peptide directing secretion. Cys-106 and Cys-140 are joined by a disulfide. The an alpha-D-glucoside site is built by Tyr-110, Lys-112, Tyr-131, and Asp-138. A run of 7 repeats spans residues 194-205 (VASGSLYEDWDM), 213-224 (DPKASKPEDWDE), 230-241 (DPEDKKPEGWDD), 248-259 (DKDAKKPEDWDD), 263-273 (GTWEPPMIPNP), 277-287 (GEWKAKMIKNP), and 291-301 (GIWVAPDIDNP). The interval 194 to 259 (VASGSLYEDW…DAKKPEDWDD (66 aa)) is 4 X approximate repeats. The segment covering 210–220 (TIKDPKASKPE) has biased composition (basic and acidic residues). Residues 210–272 (TIKDPKASKP…GTWEPPMIPN (63 aa)) are disordered. Residues 221 to 230 (DWDEREEIAD) are compositionally biased toward acidic residues. Positions 263–301 (GTWEPPMIPNPEYKGEWKAKMIKNPAYKGIWVAPDIDNP) are 3 X approximate repeats. Glu-321 is a binding site for an alpha-D-glucoside. Over residues 357 to 376 (EEKAMFDKVKKEEDEKKAKD) the composition is skewed to basic and acidic residues. The disordered stretch occupies residues 357-420 (EEKAMFDKVK…EEEESGHDEL (64 aa)). 2 stretches are compositionally biased toward acidic residues: residues 385-398 (EAAE…EDKE) and 411-420 (EEEESGHDEL). The short motif at 417 to 420 (HDEL) is the Prevents secretion from ER element.

The protein belongs to the calreticulin family.

It localises to the endoplasmic reticulum lumen. In terms of biological role, molecular calcium-binding chaperone promoting folding, oligomeric assembly and quality control in the ER via the calreticulin/calnexin cycle. This lectin may interact transiently with almost all of the monoglucosylated glycoproteins that are synthesized in the ER. This is Calreticulin from Chlamydomonas reinhardtii (Chlamydomonas smithii).